The primary structure comprises 96 residues: Transcription and mRNA export factor SUS1 (96 aa).

Residue K68 forms a Glycyl lysine isopeptide (Lys-Gly) (interchain with G-Cter in ubiquitin) linkage.

It belongs to the ENY2 family. As to quaternary structure, component of the nuclear pore complex (NPC)-associated TREX-2 complex (transcription and export complex 2), composed of at least SUS1, SAC3, THP1, SEM1, and CDC31. TREX-2 contains 2 SUS1 chains. The TREX-2 complex interacts with the nucleoporin NUP1. Component of the 1.8 MDa SAGA transcription coactivator-HAT complex. SAGA is built of 5 distinct domains with specialized functions. Within the SAGA complex, SUS1, SGF11, SGF73 and UBP8 form an additional subcomplex of SAGA called the DUB module (deubiquitination module). Interacts directly with THP1, SAC3, SGF11, and with the RNA polymerase II.

The protein localises to the nucleus. The protein resides in the nucleoplasm. Its subcellular location is the cytoplasm. It localises to the P-body. Involved in mRNA export coupled transcription activation by association with both the TREX-2 and the SAGA complexes. At the promoters, SAGA is required for recruitment of the basal transcription machinery. It influences RNA polymerase II transcriptional activity through different activities such as TBP interaction and promoter selectivity, interaction with transcription activators, and chromatin modification through histone acetylation and deubiquitination. Within the SAGA complex, participates in a subcomplex required for deubiquitination of H2B and for the maintenance of steady-state H3 methylation levels. The TREX-2 complex functions in docking export-competent ribonucleoprotein particles (mRNPs) to the nuclear entrance of the nuclear pore complex (nuclear basket). TREX-2 participates in mRNA export and accurate chromatin positioning in the nucleus by tethering genes to the nuclear periphery. May also be involved in cytoplasmic mRNA decay by interaction with components of P-bodies. This Saccharomyces cerevisiae (strain RM11-1a) (Baker's yeast) protein is Transcription and mRNA export factor SUS1.